We begin with the raw amino-acid sequence, 95 residues long: Protein RnfH (95 aa).

The protein belongs to the UPF0125 (RnfH) family.

This chain is Protein RnfH, found in Erwinia tasmaniensis (strain DSM 17950 / CFBP 7177 / CIP 109463 / NCPPB 4357 / Et1/99).